A 49-amino-acid chain; its full sequence is Sperm protamine P1 (49 aa).

This sequence belongs to the protamine P1 family. Testis.

It localises to the nucleus. Its subcellular location is the chromosome. Protamines substitute for histones in the chromatin of sperm during the haploid phase of spermatogenesis. They compact sperm DNA into a highly condensed, stable and inactive complex. The chain is Sperm protamine P1 (PRM1) from Rhinopoma hardwickii (Lesser mouse-tailed bat).